The chain runs to 555 residues: Dihydroxy-acid dehydratase (555 aa).

C46 contributes to the [2Fe-2S] cluster binding site. D78 serves as a coordination point for Mg(2+). C119 contacts [2Fe-2S] cluster. The Mg(2+) site is built by D120 and K121. Position 121 is an N6-carboxylysine (K121). C191 is a binding site for [2Fe-2S] cluster. E442 lines the Mg(2+) pocket. Catalysis depends on S468, which acts as the Proton acceptor.

This sequence belongs to the IlvD/Edd family. In terms of assembly, homodimer. [2Fe-2S] cluster serves as cofactor. The cofactor is Mg(2+).

The enzyme catalyses (2R)-2,3-dihydroxy-3-methylbutanoate = 3-methyl-2-oxobutanoate + H2O. It catalyses the reaction (2R,3R)-2,3-dihydroxy-3-methylpentanoate = (S)-3-methyl-2-oxopentanoate + H2O. Its pathway is amino-acid biosynthesis; L-isoleucine biosynthesis; L-isoleucine from 2-oxobutanoate: step 3/4. It participates in amino-acid biosynthesis; L-valine biosynthesis; L-valine from pyruvate: step 3/4. Functions in the biosynthesis of branched-chain amino acids. Catalyzes the dehydration of (2R,3R)-2,3-dihydroxy-3-methylpentanoate (2,3-dihydroxy-3-methylvalerate) into 2-oxo-3-methylpentanoate (2-oxo-3-methylvalerate) and of (2R)-2,3-dihydroxy-3-methylbutanoate (2,3-dihydroxyisovalerate) into 2-oxo-3-methylbutanoate (2-oxoisovalerate), the penultimate precursor to L-isoleucine and L-valine, respectively. In Thermus thermophilus (strain ATCC 27634 / DSM 579 / HB8), this protein is Dihydroxy-acid dehydratase.